We begin with the raw amino-acid sequence, 329 residues long: Mas-related G-protein coupled receptor member X2 (329 aa).

The Extracellular segment spans residues 1–33 (MDPTTPAWGTESTTMNGNDQALPLLCGKETMIS). A helical membrane pass occupies residues 34-54 (VFLILFIALVGLVGNAFVLWL). Over 55–63 (LGFRMRRNA) the chain is Cytoplasmic. A helical transmembrane segment spans residues 64-84 (FSVYVLSLAGADFLFLCFQMT). Residues 85 to 96 (SCLAYLINFFGS) are Extracellular-facing. The helical transmembrane segment at 97–116 (ISINIPSFFTVMTCAYLAGL) threads the bilayer. The Cytoplasmic segment spans residues 117–143 (SMLSAISTERCLSVLWPIWYRCRRPRH). A helical transmembrane segment spans residues 144–164 (LSAVMCVLLWALSLLLSILEG). The Extracellular portion of the chain corresponds to 165-183 (KFCGFLFSDDDPGWCQTFD). The helical transmembrane segment at 184 to 204 (FITAAWLMFLFVVLCGSSLAL) threads the bilayer. The Cytoplasmic portion of the chain corresponds to 205-227 (LVRILCGSRSLPLTRLYLTILLT). Residues 228-248 (VLIFLLCGLPFGIQWFLILWI) form a helical membrane-spanning segment. Topologically, residues 249–263 (WKNSVVLFCHIHPIS) are extracellular. Residues 264-284 (VVLSSFNSSANPIIYFFVGSF) traverse the membrane as a helical segment. Residues 285–329 (RKQWRLRQPILKLALQRALQDTAEVDHSEGCFSQGTLEMSRSSLV) are Cytoplasmic-facing.

Belongs to the G-protein coupled receptor 1 family. Mas subfamily.

Its subcellular location is the cell membrane. Its function is as follows. Mast cell-specific receptor for basic secretagogues, i.e. cationic amphiphilic drugs, as well as endo- or exogenous peptides, consisting of a basic head group and a hydrophobic core. Recognizes and binds small molecules containing a cyclized tetrahydroisoquinoline (THIQ), such as non-steroidal neuromuscular blocking drugs (NMBDs), including tubocurarine and atracurium. In response to these compounds, mediates pseudo-allergic reactions characterized by histamine release, inflammation and airway contraction. This is Mas-related G-protein coupled receptor member X2 (MRGPRX2) from Macaca mulatta (Rhesus macaque).